We begin with the raw amino-acid sequence, 336 residues long: 3-isopropylmalate dehydrogenase (336 aa).

Substrate contacts are provided by R87, R97, R121, and D211. D211, D235, and D239 together coordinate Mg(2+). An NAD(+)-binding site is contributed by 271 to 283 (GSAPDIAGQGVAD).

The protein belongs to the isocitrate and isopropylmalate dehydrogenases family. LeuB type 2 subfamily. As to quaternary structure, homodimer. Mg(2+) serves as cofactor. Requires Mn(2+) as cofactor.

It localises to the cytoplasm. The enzyme catalyses (2R,3S)-3-isopropylmalate + NAD(+) = 4-methyl-2-oxopentanoate + CO2 + NADH. Its pathway is amino-acid biosynthesis; L-leucine biosynthesis; L-leucine from 3-methyl-2-oxobutanoate: step 3/4. In terms of biological role, catalyzes the oxidation of 3-carboxy-2-hydroxy-4-methylpentanoate (3-isopropylmalate) to 3-carboxy-4-methyl-2-oxopentanoate. The product decarboxylates to 4-methyl-2 oxopentanoate. In Mycobacterium avium (strain 104), this protein is 3-isopropylmalate dehydrogenase.